Here is an 86-residue protein sequence, read N- to C-terminus: Small ribosomal subunit protein uS15 (86 aa).

This sequence belongs to the universal ribosomal protein uS15 family. As to quaternary structure, part of the 30S ribosomal subunit. Forms a bridge to the 50S subunit in the 70S ribosome, contacting the 23S rRNA.

In terms of biological role, one of the primary rRNA binding proteins, it binds directly to 16S rRNA where it helps nucleate assembly of the platform of the 30S subunit by binding and bridging several RNA helices of the 16S rRNA. Forms an intersubunit bridge (bridge B4) with the 23S rRNA of the 50S subunit in the ribosome. The protein is Small ribosomal subunit protein uS15 of Mycoplasma genitalium (strain ATCC 33530 / DSM 19775 / NCTC 10195 / G37) (Mycoplasmoides genitalium).